We begin with the raw amino-acid sequence, 438 residues long: Acid phosphatase type 7 (438 aa).

The first 26 residues, 1-26 (MHPLPGYWSCYCLLLLFSLGVQGSLG), serve as a signal peptide directing secretion. Fe cation contacts are provided by aspartate 141, aspartate 170, and tyrosine 173. Aspartate 170 contributes to the Zn(2+) binding site. Asparagine 205 lines the Zn(2+) pocket. N-linked (GlcNAc...) asparagine glycosylation occurs at asparagine 211. 2 residues coordinate Zn(2+): histidine 286 and histidine 333. Histidine 335 lines the Fe cation pocket. N-linked (GlcNAc...) asparagine glycosylation is found at asparagine 350 and asparagine 404.

It belongs to the metallophosphoesterase superfamily. Purple acid phosphatase family. Fe cation is required as a cofactor. Zn(2+) serves as cofactor.

It localises to the secreted. The catalysed reaction is a phosphate monoester + H2O = an alcohol + phosphate. In Homo sapiens (Human), this protein is Acid phosphatase type 7.